A 466-amino-acid polypeptide reads, in one-letter code: Tissue alpha-L-fucosidase (466 aa).

An N-terminal signal peptide occupies residues 1 to 31; it reads MRAPGMRSRPAGPALLLLLLFLGAAESVRRA. Thr170 carries the phosphothreonine modification. N-linked (GlcNAc...) asparagine glycosylation is found at Asn241, Asn268, and Asn382.

The protein belongs to the glycosyl hydrolase 29 family. In terms of assembly, homotetramer.

The protein resides in the lysosome. It carries out the reaction an alpha-L-fucoside + H2O = L-fucose + an alcohol. The enzyme catalyses a neolactoside IV(2)-alpha-Fuc-nLc4Cer(d18:1(4E)) + H2O = a neolactoside nLc4Cer(d18:1(4E)) + L-fucose. The catalysed reaction is a neolactoside IV(2)-alpha-Fuc-nLc4Cer(d18:0) + H2O = a neolactoside nLc4Cer(d18:0) + L-fucose. Alpha-L-fucosidase is responsible for hydrolyzing the alpha-1,6-linked fucose joined to the reducing-end N-acetylglucosamine of the carbohydrate moieties of glycoproteins. This chain is Tissue alpha-L-fucosidase, found in Homo sapiens (Human).